Reading from the N-terminus, the 533-residue chain is Malate synthase A (533 aa).

Arg-166 (proton acceptor) is an active-site residue. Asp-447 acts as the Proton donor in catalysis.

This sequence belongs to the malate synthase family.

It localises to the cytoplasm. The catalysed reaction is glyoxylate + acetyl-CoA + H2O = (S)-malate + CoA + H(+). The protein operates within carbohydrate metabolism; glyoxylate cycle; (S)-malate from isocitrate: step 2/2. The sequence is that of Malate synthase A (aceB) from Escherichia coli (strain K12).